A 320-amino-acid chain; its full sequence is Olfactory receptor 12D1 (320 aa).

Residues M1–P23 are Extracellular-facing. The N-linked (GlcNAc...) asparagine glycan is linked to N3. Residues F24–L44 traverse the membrane as a helical segment. Topologically, residues M45–S55 are cytoplasmic. Residues P56–L76 form a helical membrane-spanning segment. Residues P77 to S97 are Extracellular-facing. C95 and C177 form a disulfide bridge. A helical transmembrane segment spans residues Q98–F118. At D119–Q141 the chain is on the cytoplasmic side. A helical transmembrane segment spans residues M142 to S162. Residues R163–T203 lie on the Extracellular side of the membrane. The chain crosses the membrane as a helical span at residues I204–F224. The Cytoplasmic portion of the chain corresponds to F225 to S238. A helical membrane pass occupies residues T239–I259. The Extracellular portion of the chain corresponds to H260–D270. Residues R271 to L291 form a helical membrane-spanning segment. Topologically, residues R292 to A320 are cytoplasmic.

The protein belongs to the G-protein coupled receptor 1 family.

It localises to the cell membrane. In terms of biological role, odorant receptor. This Homo sapiens (Human) protein is Olfactory receptor 12D1 (OR12D1).